We begin with the raw amino-acid sequence, 630 residues long: Telomere repeat-binding protein 5 (630 aa).

3 disordered regions span residues 1-38 (MVLQ…SENH), 56-78 (EGGN…CAVK), and 308-327 (YTAS…GSPR). Residues 57 to 71 (GGNSSSSSNNTSGNN) are compositionally biased toward low complexity. A compositionally biased stretch (polar residues) spans 309 to 325 (TASQSEETNKNEGQSGS). Residues 354–433 (VKLGIKSFRV…SDTLGFCLEP (80 aa)) enclose the Ubiquitin-like domain. The disordered stretch occupies residues 463–489 (LPSPGKHAKPSNSVESDLDSKPSAPNR). The HTH myb-type domain maps to 523–582 (AQRRIRRPFSVAEVEALVQAVERLGTGRWRDVKLRAFDNAKHRTYVDLKDKWKTLVHTAR). A DNA-binding region (H-T-H motif) is located at residues 551–578 (WRDVKLRAFDNAKHRTYVDLKDKWKTLV).

In terms of assembly, homodimer. As to expression, expressed ubiquitously.

The protein localises to the nucleus. Binds specifically to the plant telomeric double-stranded DNA sequences. At least 6 repeats of telomeric sequences are required for binding. This is Telomere repeat-binding protein 5 (TRP5) from Arabidopsis thaliana (Mouse-ear cress).